The sequence spans 525 residues: GMP synthase [glutamine-hydrolyzing] (525 aa).

One can recognise a Glutamine amidotransferase type-1 domain in the interval 9-207; that stretch reads RILILDFGSQ…VLDVCQCEAL (199 aa). The active-site Nucleophile is C86. Active-site residues include H181 and E183. A GMPS ATP-PPase domain is found at 208-400; the sequence is WTPASIIEDT…LGLPYDMLNR (193 aa). 235–241 serves as a coordination point for ATP; it reads SGGVDSS.

Homodimer.

The catalysed reaction is XMP + L-glutamine + ATP + H2O = GMP + L-glutamate + AMP + diphosphate + 2 H(+). Its pathway is purine metabolism; GMP biosynthesis; GMP from XMP (L-Gln route): step 1/1. Catalyzes the synthesis of GMP from XMP. This is GMP synthase [glutamine-hydrolyzing] from Photorhabdus laumondii subsp. laumondii (strain DSM 15139 / CIP 105565 / TT01) (Photorhabdus luminescens subsp. laumondii).